Here is a 247-residue protein sequence, read N- to C-terminus: tRNA (guanine-N(1)-)-methyltransferase (247 aa).

S-adenosyl-L-methionine contacts are provided by residues G112 and 131–136 (LGDFVL).

It belongs to the RNA methyltransferase TrmD family. Homodimer.

The protein localises to the cytoplasm. The catalysed reaction is guanosine(37) in tRNA + S-adenosyl-L-methionine = N(1)-methylguanosine(37) in tRNA + S-adenosyl-L-homocysteine + H(+). Functionally, specifically methylates guanosine-37 in various tRNAs. The chain is tRNA (guanine-N(1)-)-methyltransferase from Syntrophotalea carbinolica (strain DSM 2380 / NBRC 103641 / GraBd1) (Pelobacter carbinolicus).